A 476-amino-acid chain; its full sequence is Ribosomal RNA small subunit methyltransferase F (476 aa).

S-adenosyl-L-methionine-binding positions include 125-131 (AAAPGSK), glutamate 149, aspartate 176, and aspartate 194. Cysteine 247 (nucleophile) is an active-site residue.

Belongs to the class I-like SAM-binding methyltransferase superfamily. RsmB/NOP family.

The protein localises to the cytoplasm. It carries out the reaction cytidine(1407) in 16S rRNA + S-adenosyl-L-methionine = 5-methylcytidine(1407) in 16S rRNA + S-adenosyl-L-homocysteine + H(+). In terms of biological role, specifically methylates the cytosine at position 1407 (m5C1407) of 16S rRNA. This chain is Ribosomal RNA small subunit methyltransferase F, found in Aeromonas salmonicida (strain A449).